The sequence spans 225 residues: Probable septum site-determining protein MinC (225 aa).

This sequence belongs to the MinC family. In terms of assembly, interacts with MinD and FtsZ.

Functionally, cell division inhibitor that blocks the formation of polar Z ring septums. Rapidly oscillates between the poles of the cell to destabilize FtsZ filaments that have formed before they mature into polar Z rings. Prevents FtsZ polymerization. The protein is Probable septum site-determining protein MinC of Listeria welshimeri serovar 6b (strain ATCC 35897 / DSM 20650 / CCUG 15529 / CIP 8149 / NCTC 11857 / SLCC 5334 / V8).